Consider the following 129-residue polypeptide: Large ribosomal subunit protein bL12 (129 aa).

Belongs to the bacterial ribosomal protein bL12 family. Homodimer. Part of the ribosomal stalk of the 50S ribosomal subunit. Forms a multimeric L10(L12)X complex, where L10 forms an elongated spine to which 2 to 4 L12 dimers bind in a sequential fashion. Binds GTP-bound translation factors.

Forms part of the ribosomal stalk which helps the ribosome interact with GTP-bound translation factors. Is thus essential for accurate translation. This Photobacterium profundum (strain SS9) protein is Large ribosomal subunit protein bL12.